A 139-amino-acid chain; its full sequence is Small ribosomal subunit protein uS12m (139 aa).

The transit peptide at 1–29 directs the protein to the mitochondrion; it reads MSWSGPLRGLNTSLTCGPALVPRLWATCS. Residues 36–56 form a disordered region; that stretch reads MHRLGGPPKRPPQKLGPTEGR.

The protein belongs to the universal ribosomal protein uS12 family. Component of the mitochondrial ribosome small subunit (28S) which comprises a 12S rRNA and about 30 distinct proteins.

The protein localises to the mitochondrion. The sequence is that of Small ribosomal subunit protein uS12m (MRPS12) from Pongo abelii (Sumatran orangutan).